Here is a 136-residue protein sequence, read N- to C-terminus: D-ribose pyranase (136 aa).

His-20 (proton donor) is an active-site residue. Substrate-binding positions include Asp-28, His-98, and 120 to 122 (YAN).

It belongs to the RbsD / FucU family. RbsD subfamily. In terms of assembly, homodecamer.

It localises to the cytoplasm. The enzyme catalyses beta-D-ribopyranose = beta-D-ribofuranose. Its pathway is carbohydrate metabolism; D-ribose degradation; D-ribose 5-phosphate from beta-D-ribopyranose: step 1/2. Its function is as follows. Catalyzes the interconversion of beta-pyran and beta-furan forms of D-ribose. This is D-ribose pyranase from Geobacillus kaustophilus (strain HTA426).